We begin with the raw amino-acid sequence, 355 residues long: Probable dual-specificity RNA methyltransferase RlmN (355 aa).

Glu-89 (proton acceptor) is an active-site residue. Residues 95–322 (YENRKTVCLS…KRLGVPTSIR (228 aa)) enclose the Radical SAM core domain. Cys-102 and Cys-333 form a disulfide bridge. [4Fe-4S] cluster is bound by residues Cys-109, Cys-113, and Cys-116. Residues 159–160 (GE), Ser-191, 214–216 (SLH), and Asn-290 each bind S-adenosyl-L-methionine. Cys-333 (S-methylcysteine intermediate) is an active-site residue.

It belongs to the radical SAM superfamily. RlmN family. [4Fe-4S] cluster serves as cofactor.

The protein resides in the cytoplasm. It catalyses the reaction adenosine(2503) in 23S rRNA + 2 reduced [2Fe-2S]-[ferredoxin] + 2 S-adenosyl-L-methionine = 2-methyladenosine(2503) in 23S rRNA + 5'-deoxyadenosine + L-methionine + 2 oxidized [2Fe-2S]-[ferredoxin] + S-adenosyl-L-homocysteine. The catalysed reaction is adenosine(37) in tRNA + 2 reduced [2Fe-2S]-[ferredoxin] + 2 S-adenosyl-L-methionine = 2-methyladenosine(37) in tRNA + 5'-deoxyadenosine + L-methionine + 2 oxidized [2Fe-2S]-[ferredoxin] + S-adenosyl-L-homocysteine. Specifically methylates position 2 of adenine 2503 in 23S rRNA and position 2 of adenine 37 in tRNAs. In Thermus thermophilus (strain ATCC BAA-163 / DSM 7039 / HB27), this protein is Probable dual-specificity RNA methyltransferase RlmN.